Here is a 555-residue protein sequence, read N- to C-terminus: Chaperonin GroEL 2 (555 aa).

ATP contacts are provided by residues 29 to 32 (TLGP), 86 to 90 (DGTTT), Gly414, 480 to 482 (NAL), and Asp496.

This sequence belongs to the chaperonin (HSP60) family. Forms a cylinder of 14 subunits composed of two heptameric rings stacked back-to-back. Interacts with the co-chaperonin GroES.

The protein localises to the cytoplasm. The catalysed reaction is ATP + H2O + a folded polypeptide = ADP + phosphate + an unfolded polypeptide.. Its function is as follows. Together with its co-chaperonin GroES, plays an essential role in assisting protein folding. The GroEL-GroES system forms a nano-cage that allows encapsulation of the non-native substrate proteins and provides a physical environment optimized to promote and accelerate protein folding. This is Chaperonin GroEL 2 from Synechococcus sp. (strain ATCC 27144 / PCC 6301 / SAUG 1402/1) (Anacystis nidulans).